Here is a 304-residue protein sequence, read N- to C-terminus: Developmental pluripotency-associated protein 4 (304 aa).

A compositionally biased stretch (polar residues) spans 1–11 (MLRGSASSTSM). 2 disordered regions span residues 1–84 (MLRG…IPPL) and 147–176 (KKLK…VGEP). The segment covering 12–29 (EKAKGKEWTSTEKSREED) has biased composition (basic and acidic residues). Position 215 is a phosphothreonine (threonine 215). A phosphoserine mark is found at serine 221 and serine 226.

Interacts with DPPA2. Interacts with PCGF1.

Its subcellular location is the nucleus. May be involved in the maintenance of active epigenetic status of target genes. May inhibit differentiation of embryonic cells into a primitive ectoderm lineage. This Homo sapiens (Human) protein is Developmental pluripotency-associated protein 4 (DPPA4).